Reading from the N-terminus, the 336-residue chain is 4-hydroxy-2-oxovalerate aldolase (336 aa).

Residues 4-254 (PRLTDTTLRD…NPGLDVLALM (251 aa)) form the Pyruvate carboxyltransferase domain. 12 to 13 (RD) provides a ligand contact to substrate. A Mn(2+)-binding site is contributed by aspartate 13. Histidine 16 serves as the catalytic Proton acceptor. 2 residues coordinate substrate: serine 166 and histidine 193. Residues histidine 193 and histidine 195 each contribute to the Mn(2+) site. Tyrosine 284 contributes to the substrate binding site.

Belongs to the 4-hydroxy-2-oxovalerate aldolase family.

It catalyses the reaction (S)-4-hydroxy-2-oxopentanoate = acetaldehyde + pyruvate. The protein is 4-hydroxy-2-oxovalerate aldolase of Roseiflexus castenholzii (strain DSM 13941 / HLO8).